The chain runs to 224 residues: Lipoprotein-releasing system ATP-binding protein LolD (224 aa).

Residues 4-224 form the ABC transporter domain; the sequence is YTAKDISKNY…TLLDGSLQEE (221 aa). 40 to 47 serves as a coordination point for ATP; it reads GASGSGKT.

It belongs to the ABC transporter superfamily. Lipoprotein translocase (TC 3.A.1.125) family. The complex is composed of two ATP-binding proteins (LolD) and two transmembrane proteins (LolC and LolE).

It localises to the cell inner membrane. Part of the ABC transporter complex LolCDE involved in the translocation of mature outer membrane-directed lipoproteins, from the inner membrane to the periplasmic chaperone, LolA. Responsible for the formation of the LolA-lipoprotein complex in an ATP-dependent manner. The protein is Lipoprotein-releasing system ATP-binding protein LolD of Desulfotalea psychrophila (strain LSv54 / DSM 12343).